The sequence spans 715 residues: Photosystem I P700 chlorophyll a apoprotein A1 (715 aa).

A run of 8 helical transmembrane segments spans residues 60 to 83 (VFSA…FHGA), 146 to 169 (LYST…FHYH), 185 to 209 (LNHH…HVSL), 281 to 299 (TVHH…GHMY), 336 to 359 (WHAQ…HHMY), 375 to 401 (LSLF…IFMV), 423 to 445 (AIIS…LYIH), and 521 to 539 (FLVH…LILL). [4Fe-4S] cluster contacts are provided by cysteine 563 and cysteine 572. Helical transmembrane passes span 579 to 600 (HVFL…HFSW) and 654 to 676 (LSAY…MFLF). Histidine 665 contacts chlorophyll a'. The chlorophyll a site is built by methionine 673 and tyrosine 681. Tryptophan 682 provides a ligand contact to phylloquinone. The helical transmembrane segment at 714–715 (AE) threads the bilayer.

Belongs to the PsaA/PsaB family. In terms of assembly, the PsaA/B heterodimer binds the P700 chlorophyll special pair and subsequent electron acceptors. PSI consists of a core antenna complex that captures photons, and an electron transfer chain that converts photonic excitation into a charge separation. The eukaryotic PSI reaction center is composed of at least 11 subunits. It depends on P700 is a chlorophyll a/chlorophyll a' dimer, A0 is one or more chlorophyll a, A1 is one or both phylloquinones and FX is a shared 4Fe-4S iron-sulfur center. as a cofactor.

Its subcellular location is the plastid. The protein localises to the chloroplast thylakoid membrane. The enzyme catalyses reduced [plastocyanin] + hnu + oxidized [2Fe-2S]-[ferredoxin] = oxidized [plastocyanin] + reduced [2Fe-2S]-[ferredoxin]. Its function is as follows. PsaA and PsaB bind P700, the primary electron donor of photosystem I (PSI), as well as the electron acceptors A0, A1 and FX. PSI is a plastocyanin-ferredoxin oxidoreductase, converting photonic excitation into a charge separation, which transfers an electron from the donor P700 chlorophyll pair to the spectroscopically characterized acceptors A0, A1, FX, FA and FB in turn. Oxidized P700 is reduced on the lumenal side of the thylakoid membrane by plastocyanin. This chain is Photosystem I P700 chlorophyll a apoprotein A1, found in Phlegmariurus squarrosus (Rock tassel fern).